The primary structure comprises 438 residues: Acid phosphatase type 7 (438 aa).

The signal sequence occupies residues 1-26 (MHPLPGYWSCYCLLLLFSLGVQGSLG). Positions 141, 170, and 173 each coordinate Fe cation. A Zn(2+)-binding site is contributed by Asp170. Position 205 (Asn205) interacts with Zn(2+). The N-linked (GlcNAc...) asparagine glycan is linked to Asn211. Residues His286 and His333 each coordinate Zn(2+). Residue His335 participates in Fe cation binding. Residues Asn350 and Asn404 are each glycosylated (N-linked (GlcNAc...) asparagine).

It belongs to the metallophosphoesterase superfamily. Purple acid phosphatase family. Requires Fe cation as cofactor. Zn(2+) is required as a cofactor.

The protein localises to the secreted. It carries out the reaction a phosphate monoester + H2O = an alcohol + phosphate. In Homo sapiens (Human), this protein is Acid phosphatase type 7.